The following is a 264-amino-acid chain: Low molecular mass lipoprotein PBMHPC-23 (264 aa).

The signal sequence occupies residues 1-23; it reads MKFLVVFAVVRACVTPACAEMSA.

The protein belongs to the 30 kDa lipoprotein family.

It is found in the secreted. The protein is Low molecular mass lipoprotein PBMHPC-23 of Bombyx mori (Silk moth).